We begin with the raw amino-acid sequence, 1062 residues long: Histone H3-lysine(4) N-trimethyltransferase ATX1 (1062 aa).

The segment at 159–184 (NAFSGNKQNGSSRRKGSSSKNQDKAT) is disordered. Residues 301–365 (PGDIVWAKLA…VKQAISFIKG (65 aa)) form the PWWP domain. Residues 401–424 (QLQKGADSVDSDMANSTEEGNSGG) are disordered. Positions 441–500 (DFRHIIGDLLIINLGKVVTDSQFFKDENHIWPEGYTAMRKFTSLTDHSASALYKMEVLRD) constitute an FYR N-terminal domain. Residues 504-586 (KTHPLFIVTA…RPSSHVSMCK (83 aa)) form the FYR C-terminal domain. Residues 591–647 (RHQNQPTGYRPVRVDWKDLDKCNVCHMDEEYENNLFLQCDKCRMMVHAKCYGELEPC) form a Phorbol-ester/DAG-type zinc finger. The segment at 599 to 1062 (YRPVRVDWKD…RCDLIDWTAE (464 aa)) is interaction with PIP5. The PHD-type 1 zinc-finger motif lies at 609–660 (LDKCNVCHMDEEYENNLFLQCDKCRMMVHAKCYGELEPCDGALWLCNLCRPG). The C2HC pre-PHD-type zinc finger occupies 665–698 (PPRCCLCPVVGGAMKPTTDGRWAHLACAIWIPET). The PHD-type 2 zinc-finger motif lies at 722–785 (LMCTICGVSY…RMLSFCKRHR (64 aa)). Positions 898–1016 (KRLAFGKSGI…KWEELTYDYR (119 aa)) constitute an SET domain. His908 lines the S-adenosyl-L-methionine pocket. O-linked (GlcNAc) serine glycosylation occurs at Ser947. S-adenosyl-L-methionine is bound by residues Tyr954 and 977–978 (NH). Zn(2+) contacts are provided by Cys980, Cys1026, Cys1028, and Cys1033. The Post-SET domain occupies 1022 to 1038 (ERLSCSCGFPGCRGVVN).

It belongs to the class V-like SAM-binding methyltransferase superfamily. Histone-lysine methyltransferase family. TRX/MLL subfamily. As to quaternary structure, interacts with PIP5. Interacts with WDR5A. Binds to CLF in the nucleus. Interacts with NRPB1 CTD domain, especially when NRPB1 is phosphorylated on 'Ser-5' of the heptapeptide repeat. Component of a nuclear protein complex containing at least TATA binding proteins (TBPs, e.g. TBP1 and TBP2) and ATX1. Associates with ULT1 for trimethylating 'Lys-4' on histone H3 (H3K4me3) at flower MADS box gene loci. Interacts with SEC. In terms of assembly, interacts with A4/EF1A in the cytoplasm on the nuclear periphery. In terms of processing, activated via O-glycosylation by SEC; this modification triggers FLC locus H3K4me3 histone modification, thus preventing premature flowering. As to expression, strongly expressed in cotyledons, but weak levels in the first true leaves, except at the hydothodes. Ubiquitous with higher levels in dividing tissues, including inflorescence meristem and flower primordia. Expressed also in leaves (especially at hydathodes), in growing inflorescence stems and in the mature flowers. In terms of tissue distribution, strongly expressed in young seedlings.

The protein resides in the nucleus. It is found in the cytoplasm. It localises to the perinuclear region. The catalysed reaction is L-lysyl(4)-[histone H3] + 3 S-adenosyl-L-methionine = N(6),N(6),N(6)-trimethyl-L-lysyl(4)-[histone H3] + 3 S-adenosyl-L-homocysteine + 3 H(+). It catalyses the reaction L-lysyl-[protein] + 3 S-adenosyl-L-methionine = N(6),N(6),N(6)-trimethyl-L-lysyl-[protein] + 3 S-adenosyl-L-homocysteine + 3 H(+). Its function is as follows. Binds to the promoter and regulates the transcription of target genes, maintaining them in an active state; at promoters, required for TATA binding proteins (TBPs, e.g. TBP1 and TBP2) and RNA polymerase II (Pol II) recruitment, and, in a subsequent event, is recruited by a phosphorylated form of Pol II to the +300-bp region of transcribed sequences to trimethylates nucleosomes. Histone trimethyltransferase that trimethylates 'Lys-4' of histone H3 (H3K4me3); H3 'Lys-4' methylation represents a specific tag for epigenetic transcriptional activation and is required for efficient elongation of transcription but not for transcription initiation. Methylates only a limited fraction of nucleosomes of target genes (e.g. FLC, NAP, XTH33 and WRKY70). Necessary for WDR5A occupancy at WRKY70 and LTP7 genes. Required to maintain the active state of class A (AP1 and AP2), class B (PI and AP3) and class C (AG, AGAMOUS) floral homeotic genes at early stages of flower development. Together with CLF, modulates AG nucleosome methylation statement. Involved in epigenetic regulation (e.g. H3K4me3) of the floral repressors FLC, FT and SOC1 to prevent the transition from vegetative to reproductive development, independently of the photoperiod; binds the active FLC locus before flowering, but this interaction is released upon the transition to flowering. Regulates floral organ identity and flowering transition. Functions as a receptor for the lipid messenger phosphatidylinositol 5-phosphate (PI5P), which negatively regulates its transcriptional activation activity. Exhibits histone methylase activity and subsequent transcriptional regulation on WRKY70 gene, and, to a lower extent on secondary defense-response targets salicylic acid (SA)-responsive gene PR1 and jasmonic acid (JA)-responsive gene THI2.1. Involved in response to dehydration stress-response in both abscisic acid (ABA)-dependent and ABA-independent pathways; this includes specific genes (e.g. COR15A, ADH1, CBF4, RD29A, RD29B, RD26, ABF3, NCED3 and ABA3) epigenetic regulation (e.g. H3K4me3 and Pol II recruitment) to promote their transcription and influence ABA production. Implicated in stomatal closure regulation. Indirect repressor of XTH genes (XTH33). Necessary for the phosphorylation of Pol II NRPB1 (e.g. Ser5P and Ser2P) at the promoters of target genes, thus regulating both early and late stages of transcription. Controls root growth and architecture by regulating the timing of root development, stem cell niche maintenance (e.g. quiescent center (QC)), and cell patterning during primary and lateral root development. Modulates cell cycle duration, cell production, and the transition from cell proliferation in the root apical meristem (RAM) to cell elongation. In terms of biological role, trimethylates A4/EF1A post-translationally at Lys-396. Required for actin cytoskeleton organization. This is Histone H3-lysine(4) N-trimethyltransferase ATX1 from Arabidopsis thaliana (Mouse-ear cress).